The primary structure comprises 558 residues: Glutamine--tRNA ligase (558 aa).

The 'HIGH' region motif lies at 34 to 44 (PEPNGYLHIGH). Residues 35–37 (EPN) and 41–47 (HIGHAKS) contribute to the ATP site. Residues Asp-67 and Tyr-212 each contribute to the L-glutamine site. ATP is bound by residues Thr-231, 261–262 (RL), and 269–271 (LSK). The 'KMSKS' region motif lies at 268 to 272 (VLSKR).

It belongs to the class-I aminoacyl-tRNA synthetase family. As to quaternary structure, monomer.

It is found in the cytoplasm. It catalyses the reaction tRNA(Gln) + L-glutamine + ATP = L-glutaminyl-tRNA(Gln) + AMP + diphosphate. This is Glutamine--tRNA ligase from Pseudoalteromonas atlantica (strain T6c / ATCC BAA-1087).